Here is a 177-residue protein sequence, read N- to C-terminus: Large ribosomal subunit protein uL6 (177 aa).

Belongs to the universal ribosomal protein uL6 family. As to quaternary structure, part of the 50S ribosomal subunit.

Functionally, this protein binds to the 23S rRNA, and is important in its secondary structure. It is located near the subunit interface in the base of the L7/L12 stalk, and near the tRNA binding site of the peptidyltransferase center. This is Large ribosomal subunit protein uL6 from Erythrobacter litoralis (strain HTCC2594).